The chain runs to 478 residues: Aspartyl/glutamyl-tRNA(Asn/Gln) amidotransferase subunit B (478 aa).

It belongs to the GatB/GatE family. GatB subfamily. As to quaternary structure, heterotrimer of A, B and C subunits.

The enzyme catalyses L-glutamyl-tRNA(Gln) + L-glutamine + ATP + H2O = L-glutaminyl-tRNA(Gln) + L-glutamate + ADP + phosphate + H(+). It carries out the reaction L-aspartyl-tRNA(Asn) + L-glutamine + ATP + H2O = L-asparaginyl-tRNA(Asn) + L-glutamate + ADP + phosphate + 2 H(+). Its function is as follows. Allows the formation of correctly charged Asn-tRNA(Asn) or Gln-tRNA(Gln) through the transamidation of misacylated Asp-tRNA(Asn) or Glu-tRNA(Gln) in organisms which lack either or both of asparaginyl-tRNA or glutaminyl-tRNA synthetases. The reaction takes place in the presence of glutamine and ATP through an activated phospho-Asp-tRNA(Asn) or phospho-Glu-tRNA(Gln). In Brevibacillus brevis (strain 47 / JCM 6285 / NBRC 100599), this protein is Aspartyl/glutamyl-tRNA(Asn/Gln) amidotransferase subunit B.